The sequence spans 372 residues: N-methyl-L-tryptophan oxidase (372 aa).

Residue 4–34 (DLIIIGSGSVGAAAGYYATRAGLNVLMTDAH) participates in FAD binding. Position 308 is an S-8alpha-FAD cysteine (cysteine 308).

This sequence belongs to the MSOX/MTOX family. MTOX subfamily. In terms of assembly, monomer. It depends on FAD as a cofactor.

It catalyses the reaction N(alpha)-methyl-L-tryptophan + O2 + H2O = L-tryptophan + formaldehyde + H2O2. In terms of biological role, catalyzes the oxidative demethylation of N-methyl-L-tryptophan. This is N-methyl-L-tryptophan oxidase from Escherichia coli O127:H6 (strain E2348/69 / EPEC).